The following is a 368-amino-acid chain: Glutamyl-tRNA reductase (368 aa).

Substrate-binding positions include 43–46 (TCHR), serine 89, 94–96 (EHQ), and glutamine 100. Cysteine 44 functions as the Nucleophile in the catalytic mechanism. An NADP(+)-binding site is contributed by 164-169 (GTGMMG).

This sequence belongs to the glutamyl-tRNA reductase family. Homodimer.

The catalysed reaction is (S)-4-amino-5-oxopentanoate + tRNA(Glu) + NADP(+) = L-glutamyl-tRNA(Glu) + NADPH + H(+). It participates in porphyrin-containing compound metabolism; protoporphyrin-IX biosynthesis; 5-aminolevulinate from L-glutamyl-tRNA(Glu): step 1/2. Its function is as follows. Catalyzes the NADPH-dependent reduction of glutamyl-tRNA(Glu) to glutamate 1-semialdehyde (GSA). This Thermosipho melanesiensis (strain DSM 12029 / CIP 104789 / BI429) protein is Glutamyl-tRNA reductase.